Here is a 204-residue protein sequence, read N- to C-terminus: Proteasome subunit beta type-3-B (204 aa).

This sequence belongs to the peptidase T1B family. Component of the 20S core complex of the 26S proteasome. The 26S proteasome is composed of a core protease (CP), known as the 20S proteasome, capped at one or both ends by the 19S regulatory particle (RP/PA700). The 20S proteasome core is composed of 28 subunits that are arranged in four stacked rings, resulting in a barrel-shaped structure. The two end rings are each formed by seven alpha subunits, and the two central rings are each formed by seven beta subunits. The catalytic chamber with the active sites is on the inside of the barrel.

The protein resides in the cytoplasm. It localises to the nucleus. In terms of biological role, non-catalytic component of the proteasome, a multicatalytic proteinase complex which is characterized by its ability to cleave peptides with Arg, Phe, Tyr, Leu, and Glu adjacent to the leaving group at neutral or slightly basic pH. The proteasome has an ATP-dependent proteolytic activity. This is Proteasome subunit beta type-3-B (PBC2) from Arabidopsis thaliana (Mouse-ear cress).